Reading from the N-terminus, the 155-residue chain is MKCPFCQHDDTQVLDTRVSEEGDSIRRRRRCTSCDKRFTTYERIELTMPVVVKKNGSRTDFDPKKLQGSLQLALRKRPVSAEAVDAAIHRIEQKLLSSGEREVISGQIGELVMRELQRLDKIAYIRFASVYKSFEDVAEFQDAIAEVGRERKPAK.

Residues 3-34 fold into a zinc finger; sequence CPFCQHDDTQVLDTRVSEEGDSIRRRRRCTSC. Residues 49–139 enclose the ATP-cone domain; it reads PVVVKKNGSR…VYKSFEDVAE (91 aa).

Belongs to the NrdR family. Zn(2+) serves as cofactor.

Negatively regulates transcription of bacterial ribonucleotide reductase nrd genes and operons by binding to NrdR-boxes. The chain is Transcriptional repressor NrdR from Janthinobacterium sp. (strain Marseille) (Minibacterium massiliensis).